We begin with the raw amino-acid sequence, 158 residues long: Major latex protein 22 (158 aa).

It belongs to the MLP family. Laticifer.

The protein localises to the vacuole. It is found in the cytoplasmic vesicle. Functionally, not known; MLPs constitute up to 50% of the soluble latex protein. The polypeptide is Major latex protein 22 (MLP22) (Papaver somniferum (Opium poppy)).